Reading from the N-terminus, the 265-residue chain is Glutamate racemase (265 aa).

Substrate contacts are provided by residues 7 to 8 and 39 to 40; these read DS and YG. Cysteine 70 functions as the Proton donor/acceptor in the catalytic mechanism. 71 to 72 serves as a coordination point for substrate; that stretch reads NT. The Proton donor/acceptor role is filled by cysteine 177.

The protein belongs to the aspartate/glutamate racemases family.

It catalyses the reaction L-glutamate = D-glutamate. It participates in cell wall biogenesis; peptidoglycan biosynthesis. In terms of biological role, provides the (R)-glutamate required for cell wall biosynthesis. This chain is Glutamate racemase, found in Prochlorococcus marinus (strain NATL2A).